A 688-amino-acid chain; its full sequence is UvrABC system protein B (688 aa).

Positions 31-188 (GRVNAGEPDV…RKFVSMQYQR (158 aa)) constitute a Helicase ATP-binding domain. An ATP-binding site is contributed by 44-51 (GATGTGKS). The short motif at 97 to 120 (YYDYYQPEAYVPQTDTFIEKDSSV) is the Beta-hairpin element. The Helicase C-terminal domain maps to 434-587 (QIDDLLEQIR…QVAYNTEHGI (154 aa)). Residues 607–632 (GEDTKKMLEGRGGGKRSPTPNLRREG) are disordered. A UVR domain is found at 642–677 (ETIISDLNDQMLQAAGELKFELAARLRDELGDLKRE).

The protein belongs to the UvrB family. As to quaternary structure, forms a heterotetramer with UvrA during the search for lesions. Interacts with UvrC in an incision complex.

It is found in the cytoplasm. In terms of biological role, the UvrABC repair system catalyzes the recognition and processing of DNA lesions. A damage recognition complex composed of 2 UvrA and 2 UvrB subunits scans DNA for abnormalities. Upon binding of the UvrA(2)B(2) complex to a putative damaged site, the DNA wraps around one UvrB monomer. DNA wrap is dependent on ATP binding by UvrB and probably causes local melting of the DNA helix, facilitating insertion of UvrB beta-hairpin between the DNA strands. Then UvrB probes one DNA strand for the presence of a lesion. If a lesion is found the UvrA subunits dissociate and the UvrB-DNA preincision complex is formed. This complex is subsequently bound by UvrC and the second UvrB is released. If no lesion is found, the DNA wraps around the other UvrB subunit that will check the other stand for damage. This is UvrABC system protein B from Clavibacter sepedonicus (Clavibacter michiganensis subsp. sepedonicus).